We begin with the raw amino-acid sequence, 256 residues long: tRNA-cytidine(32) 2-sulfurtransferase (256 aa).

The short motif at 35–40 (SGGKDS) is the PP-loop motif element. [4Fe-4S] cluster contacts are provided by Cys-110, Cys-113, and Cys-201.

This sequence belongs to the TtcA family. As to quaternary structure, homodimer. Mg(2+) serves as cofactor. Requires [4Fe-4S] cluster as cofactor.

Its subcellular location is the cytoplasm. It catalyses the reaction cytidine(32) in tRNA + S-sulfanyl-L-cysteinyl-[cysteine desulfurase] + AH2 + ATP = 2-thiocytidine(32) in tRNA + L-cysteinyl-[cysteine desulfurase] + A + AMP + diphosphate + H(+). The protein operates within tRNA modification. In terms of biological role, catalyzes the ATP-dependent 2-thiolation of cytidine in position 32 of tRNA, to form 2-thiocytidine (s(2)C32). The sulfur atoms are provided by the cysteine/cysteine desulfurase (IscS) system. The chain is tRNA-cytidine(32) 2-sulfurtransferase from Coxiella burnetii (strain CbuG_Q212) (Coxiella burnetii (strain Q212)).